The chain runs to 216 residues: UPF0502 protein Smal_0052 (216 aa).

It belongs to the UPF0502 family.

The sequence is that of UPF0502 protein Smal_0052 from Stenotrophomonas maltophilia (strain R551-3).